We begin with the raw amino-acid sequence, 678 residues long: Growth arrest-specific protein 6 (678 aa).

A signal peptide spans 1 to 30 (MAPSLSPGPAALRRAPQLLLLLLAAECALA). A Gla domain is found at 53–94 (FEEAKQGHLERECVEELCSREEAREVFENDPETDYFYPRYLD). Residues Cys65 and Cys70 are joined by a disulfide bond. At Ser71 the chain carries Phosphoserine; by FAM20C. The 39-residue stretch at 116 to 154 (LPDQCTPNPCDRKGTQACQDLMGNFFCLCKAGWGGRLCD) folds into the EGF-like 1; calcium-binding domain. 14 disulfides stabilise this stretch: Cys120/Cys133, Cys125/Cys142, Cys144/Cys153, Cys160/Cys171, Cys167/Cys180, Cys182/Cys195, Cys201/Cys212, Cys207/Cys221, Cys223/Cys236, Cys242/Cys251, Cys247/Cys260, Cys262/Cys277, Cys283/Cys570, and Cys444/Cys470. One can recognise an EGF-like 2; calcium-binding domain in the interval 156-196 (DVNECSQENGGCLQICHNKPGSFHCSCHSGFELSSDGRTCQ). One can recognise an EGF-like 3; calcium-binding domain in the interval 197–237 (DIDECADSEACGEARCKNLPGSYSCLCDEGFAYSSQEKACR). In terms of domain architecture, EGF-like 4; calcium-binding spans 238–278 (DVDECLQGRCEQVCVNSPGSYTCHCDGRGGLKLSQDMDTCE). Laminin G-like domains lie at 298-470 (GRMF…RMQC) and 477-670 (GSFY…AHSC). Asp329 and Glu331 together coordinate Ca(2+). Asn420 carries an N-linked (GlcNAc...) asparagine glycan. Residue Arg440 coordinates Ca(2+). Thr621 and Thr637 each carry phosphothreonine. Phosphotyrosine is present on Tyr640. An intrachain disulfide couples Cys643 to Cys670. Asp656 is a binding site for Ca(2+).

In terms of assembly, heterodimer and heterotetramer with AXL. Post-translationally, proteolytically processed after secretion to yield a N-terminal 36 kDa protein and a C-terminal 50 kDa protein including the laminin G-like domains which activates AXL. In terms of processing, gamma-carboxyglutamate residues are formed by vitamin K dependent carboxylation. These residues are essential for the binding of calcium. Plasma. Isoform 1 and isoform 2 are widely expressed, isoform 1 being expressed at higher levels than isoform 2 in most tissues. Isoform 2 is the predominant form in spleen.

Its subcellular location is the secreted. In terms of biological role, ligand for tyrosine-protein kinase receptors AXL, TYRO3 and MER whose signaling is implicated in cell growth and survival, cell adhesion and cell migration. GAS6/AXL signaling plays a role in various processes such as endothelial cell survival during acidification by preventing apoptosis, optimal cytokine signaling during human natural killer cell development, hepatic regeneration, gonadotropin-releasing hormone neuron survival and migration, platelet activation, or regulation of thrombotic responses. Its function is as follows. (Microbial infection) Can bridge virus envelope phosphatidylserine to the TAM receptor tyrosine kinase Axl to mediate viral entry by apoptotic mimicry. Plays a role in Dengue cell entry by apoptotic mimicry. Plays a role in Vaccinia virus cell entry by apoptotic mimicry. Plays a role in ebolavirus and marburgvirus cell entry by apoptotic mimicry. This is Growth arrest-specific protein 6 from Homo sapiens (Human).